A 166-amino-acid chain; its full sequence is uncharacterized protein (166 aa).

To C.perfringens pCP13 PCP12.

This is an uncharacterized protein from Clostridium perfringens.